We begin with the raw amino-acid sequence, 292 residues long: Glutamate racemase (292 aa).

Residues 10–11 (DS) and 42–43 (YG) each bind substrate. The active-site Proton donor/acceptor is Cys73. 74–75 (NS) contacts substrate. Cys186 functions as the Proton donor/acceptor in the catalytic mechanism. 187–188 (TH) lines the substrate pocket.

This sequence belongs to the aspartate/glutamate racemases family.

The catalysed reaction is L-glutamate = D-glutamate. Its pathway is cell wall biogenesis; peptidoglycan biosynthesis. Functionally, provides the (R)-glutamate required for cell wall biosynthesis. The protein is Glutamate racemase of Beutenbergia cavernae (strain ATCC BAA-8 / DSM 12333 / CCUG 43141 / JCM 11478 / NBRC 16432 / NCIMB 13614 / HKI 0122).